The sequence spans 236 residues: MADS-box transcription factor 3 (236 aa).

The region spanning 1 to 61 is the MADS-box domain; that stretch reads MGRGKIEIKR…GRLYEYANNS (61 aa). The K-box domain maps to 87-178; the sequence is AQHYQQESSK…RSKVVENERG (92 aa).

As to expression, expressed in lemmas, paleas and lodicules.

It is found in the nucleus. Its function is as follows. Probable transcription factor involved in the development of floral organs. Acts as C-class protein in association with MADS58. Involved in the control of lodicule number (whorl 2), stamen specification (whorl 3) and floral meristem determinacy (whorl 4), but not in the regulation of carpel morphogenesis. Plays a more predominant role in controlling lodicule development and in specifying stamen identity than MADS58. The chain is MADS-box transcription factor 3 (MADS3) from Oryza sativa subsp. japonica (Rice).